The following is a 215-amino-acid chain: 3-isopropylmalate dehydratase small subunit (215 aa).

This sequence belongs to the LeuD family. LeuD type 1 subfamily. Heterodimer of LeuC and LeuD.

It carries out the reaction (2R,3S)-3-isopropylmalate = (2S)-2-isopropylmalate. It participates in amino-acid biosynthesis; L-leucine biosynthesis; L-leucine from 3-methyl-2-oxobutanoate: step 2/4. Functionally, catalyzes the isomerization between 2-isopropylmalate and 3-isopropylmalate, via the formation of 2-isopropylmaleate. The sequence is that of 3-isopropylmalate dehydratase small subunit from Xanthomonas axonopodis pv. citri (strain 306).